A 62-amino-acid polypeptide reads, in one-letter code: LECHNQQSSEPPTTTRCSGGETNCYKKRWRDHRGYRTERGCGCPTVKKGIELNCCTTDRCNN.

Residues 1–20 (LECHNQQSSEPPTTTRCSGG) are disordered. 4 cysteine pairs are disulfide-bonded: cysteine 3–cysteine 24, cysteine 17–cysteine 41, cysteine 43–cysteine 54, and cysteine 55–cysteine 60.

Belongs to the three-finger toxin family. Short-chain subfamily. Type I alpha-neurotoxin sub-subfamily. Expressed by the venom gland.

It localises to the secreted. In terms of biological role, binds to muscle nicotinic acetylcholine receptor (nAChR) and inhibit acetylcholine from binding to the receptor, thereby impairing neuromuscular transmission. This Naja mossambica (Mozambique spitting cobra) protein is Short neurotoxin 1.